The primary structure comprises 131 residues: Large ribosomal subunit protein bL19 (131 aa).

Belongs to the bacterial ribosomal protein bL19 family.

Functionally, this protein is located at the 30S-50S ribosomal subunit interface and may play a role in the structure and function of the aminoacyl-tRNA binding site. This chain is Large ribosomal subunit protein bL19, found in Anaeromyxobacter sp. (strain K).